We begin with the raw amino-acid sequence, 128 residues long: Small ribosomal subunit protein bS6 (128 aa).

The protein belongs to the bacterial ribosomal protein bS6 family.

Binds together with bS18 to 16S ribosomal RNA. The sequence is that of Small ribosomal subunit protein bS6 from Acinetobacter baylyi (strain ATCC 33305 / BD413 / ADP1).